The following is a 663-amino-acid chain: UvrABC system protein B (663 aa).

The region spanning 26-414 (DGLESGLAKQ…DNVAEQVVRP (389 aa)) is the Helicase ATP-binding domain. 39–46 (GVTGSGKT) is an ATP binding site. Positions 92-115 (YYDYYQPEAYVPASDTFIEKDASI) match the Beta-hairpin motif. Residues 430 to 596 (QVDDLMSEIR…GINKSVEDIL (167 aa)) form the Helicase C-terminal domain. A UVR domain is found at 624 to 659 (AKQINALEKQMYAHAQNMEFELAAKIRDEYLLLKEQ).

It belongs to the UvrB family. In terms of assembly, forms a heterotetramer with UvrA during the search for lesions. Interacts with UvrC in an incision complex.

The protein resides in the cytoplasm. In terms of biological role, the UvrABC repair system catalyzes the recognition and processing of DNA lesions. A damage recognition complex composed of 2 UvrA and 2 UvrB subunits scans DNA for abnormalities. Upon binding of the UvrA(2)B(2) complex to a putative damaged site, the DNA wraps around one UvrB monomer. DNA wrap is dependent on ATP binding by UvrB and probably causes local melting of the DNA helix, facilitating insertion of UvrB beta-hairpin between the DNA strands. Then UvrB probes one DNA strand for the presence of a lesion. If a lesion is found the UvrA subunits dissociate and the UvrB-DNA preincision complex is formed. This complex is subsequently bound by UvrC and the second UvrB is released. If no lesion is found, the DNA wraps around the other UvrB subunit that will check the other stand for damage. This is UvrABC system protein B from Legionella pneumophila (strain Lens).